Reading from the N-terminus, the 64-residue chain is Chromatin protein Cren7 (64 aa).

Belongs to the Cren7 family. Monomer. Post-translationally, methylated at multiple sites, to varying extents.

Its subcellular location is the chromosome. It is found in the cytoplasm. A chromatin protein, binds double-stranded DNA without sequence specificity. Constrains negative DNA supercoils. This Aeropyrum pernix (strain ATCC 700893 / DSM 11879 / JCM 9820 / NBRC 100138 / K1) protein is Chromatin protein Cren7.